The following is a 356-amino-acid chain: Sulfate/thiosulfate import ATP-binding protein CysA (356 aa).

Residues 3 to 237 (IEVKNLVKRF…PKNSFVFHFL (235 aa)) form the ABC transporter domain. 35–42 (GPSGSGKT) contributes to the ATP binding site.

It belongs to the ABC transporter superfamily. Sulfate/tungstate importer (TC 3.A.1.6) family. The complex is composed of two ATP-binding proteins (CysA), two transmembrane proteins (CysT and CysW) and a solute-binding protein (CysP).

It is found in the cell inner membrane. The catalysed reaction is sulfate(out) + ATP + H2O = sulfate(in) + ADP + phosphate + H(+). It carries out the reaction thiosulfate(out) + ATP + H2O = thiosulfate(in) + ADP + phosphate + H(+). Functionally, part of the ABC transporter complex CysAWTP involved in sulfate/thiosulfate import. Responsible for energy coupling to the transport system. The sequence is that of Sulfate/thiosulfate import ATP-binding protein CysA from Leptospira interrogans serogroup Icterohaemorrhagiae serovar copenhageni (strain Fiocruz L1-130).